The chain runs to 496 residues: Probable zinc metalloprotease SNOG_06590 (496 aa).

A signal peptide spans 1–20; that stretch reads MRSSMFFAVCAAAALQTALS. A glycan (N-linked (GlcNAc...) asparagine) is linked at asparagine 138. Zn(2+) contacts are provided by histidine 161, aspartate 181, and glutamate 226. A glycan (N-linked (GlcNAc...) asparagine) is linked at asparagine 241. Aspartate 253 provides a ligand contact to Zn(2+). Asparagine 282, asparagine 361, asparagine 409, asparagine 415, and asparagine 457 each carry an N-linked (GlcNAc...) asparagine glycan. One can recognise a Fibronectin type-III domain in the interval 402–496; it reads EPMNVGINTT…PFPFGCTRNC (95 aa).

Belongs to the peptidase M28 family. M28B subfamily. Zn(2+) is required as a cofactor.

The protein resides in the secreted. This chain is Probable zinc metalloprotease SNOG_06590, found in Phaeosphaeria nodorum (strain SN15 / ATCC MYA-4574 / FGSC 10173) (Glume blotch fungus).